Consider the following 259-residue polypeptide: Imidazole glycerol phosphate synthase subunit HisF (259 aa).

Active-site residues include Asp11 and Asp130.

Belongs to the HisA/HisF family. As to quaternary structure, heterodimer of HisH and HisF.

Its subcellular location is the cytoplasm. The catalysed reaction is 5-[(5-phospho-1-deoxy-D-ribulos-1-ylimino)methylamino]-1-(5-phospho-beta-D-ribosyl)imidazole-4-carboxamide + L-glutamine = D-erythro-1-(imidazol-4-yl)glycerol 3-phosphate + 5-amino-1-(5-phospho-beta-D-ribosyl)imidazole-4-carboxamide + L-glutamate + H(+). It functions in the pathway amino-acid biosynthesis; L-histidine biosynthesis; L-histidine from 5-phospho-alpha-D-ribose 1-diphosphate: step 5/9. Functionally, IGPS catalyzes the conversion of PRFAR and glutamine to IGP, AICAR and glutamate. The HisF subunit catalyzes the cyclization activity that produces IGP and AICAR from PRFAR using the ammonia provided by the HisH subunit. This Variovorax paradoxus (strain S110) protein is Imidazole glycerol phosphate synthase subunit HisF.